The following is a 141-amino-acid chain: Large ribosomal subunit protein uL16 (141 aa).

Over residues 1–16 (MLMPRKPPKGFRKPHH) the composition is skewed to basic residues. A disordered region spans residues 1-27 (MLMPRKPPKGFRKPHHPDRSGASKGGN).

This sequence belongs to the universal ribosomal protein uL16 family. In terms of assembly, part of the 50S ribosomal subunit.

Binds 23S rRNA and is also seen to make contacts with the A and possibly P site tRNAs. The chain is Large ribosomal subunit protein uL16 from Salinispora arenicola (strain CNS-205).